The sequence spans 363 residues: Putative replication factor C small subunit L510 (363 aa).

Residue 47-54 coordinates ATP; sequence GPPGTGKT.

Belongs to the activator 1 small subunits family. RfcS subfamily.

Its function is as follows. Part of the RFC clamp loader complex which loads the PCNA sliding clamp onto DNA. In Acanthamoeba polyphaga mimivirus (APMV), this protein is Putative replication factor C small subunit L510.